A 614-amino-acid polypeptide reads, in one-letter code: Dihydroxy-acid dehydratase (614 aa).

Asp-81 provides a ligand contact to Mg(2+). Cys-122 lines the [2Fe-2S] cluster pocket. Residues Asp-123 and Lys-124 each contribute to the Mg(2+) site. Position 124 is an N6-carboxylysine (Lys-124). Cys-195 contributes to the [2Fe-2S] cluster binding site. Glu-491 contributes to the Mg(2+) binding site. The Proton acceptor role is filled by Ser-517.

This sequence belongs to the IlvD/Edd family. Homodimer. Requires [2Fe-2S] cluster as cofactor. Mg(2+) serves as cofactor.

The enzyme catalyses (2R)-2,3-dihydroxy-3-methylbutanoate = 3-methyl-2-oxobutanoate + H2O. It carries out the reaction (2R,3R)-2,3-dihydroxy-3-methylpentanoate = (S)-3-methyl-2-oxopentanoate + H2O. It participates in amino-acid biosynthesis; L-isoleucine biosynthesis; L-isoleucine from 2-oxobutanoate: step 3/4. The protein operates within amino-acid biosynthesis; L-valine biosynthesis; L-valine from pyruvate: step 3/4. Its function is as follows. Functions in the biosynthesis of branched-chain amino acids. Catalyzes the dehydration of (2R,3R)-2,3-dihydroxy-3-methylpentanoate (2,3-dihydroxy-3-methylvalerate) into 2-oxo-3-methylpentanoate (2-oxo-3-methylvalerate) and of (2R)-2,3-dihydroxy-3-methylbutanoate (2,3-dihydroxyisovalerate) into 2-oxo-3-methylbutanoate (2-oxoisovalerate), the penultimate precursor to L-isoleucine and L-valine, respectively. This Rhodopseudomonas palustris (strain BisA53) protein is Dihydroxy-acid dehydratase.